A 416-amino-acid chain; its full sequence is 4-hydroxy-3-methylbut-2-en-1-yl diphosphate synthase (flavodoxin) (416 aa).

The [4Fe-4S] cluster site is built by Cys-304, Cys-307, Cys-350, and Glu-357.

The protein belongs to the IspG family. [4Fe-4S] cluster serves as cofactor.

The catalysed reaction is (2E)-4-hydroxy-3-methylbut-2-enyl diphosphate + oxidized [flavodoxin] + H2O + 2 H(+) = 2-C-methyl-D-erythritol 2,4-cyclic diphosphate + reduced [flavodoxin]. Its pathway is isoprenoid biosynthesis; isopentenyl diphosphate biosynthesis via DXP pathway; isopentenyl diphosphate from 1-deoxy-D-xylulose 5-phosphate: step 5/6. Its function is as follows. Converts 2C-methyl-D-erythritol 2,4-cyclodiphosphate (ME-2,4cPP) into 1-hydroxy-2-methyl-2-(E)-butenyl 4-diphosphate. The protein is 4-hydroxy-3-methylbut-2-en-1-yl diphosphate synthase (flavodoxin) of Rhizobium leguminosarum bv. trifolii (strain WSM2304).